Consider the following 591-residue polypeptide: Paxillin (591 aa).

An N-acetylmethionine modification is found at Met-1. Position 2 is an N-acetylserine (Asp-2). The short motif at 3 to 15 (DLDALLADLESTT) is the LD motif 1 element. A disordered region spans residues 17–138 (HISKRPVFLS…PSPTVMSTSL (122 aa)). Phosphotyrosine; by PTK6 is present on Tyr-31. Positions 45–54 (VPPPVPPPPS) are enriched in pro residues. Residues 69 to 106 (WQPSSSRFIHQQPQSSSPVYGSSAKTSSVSNPQDSVGS) show a composition bias toward polar residues. Phosphoserine occurs at positions 83 and 85. Position 88 is a phosphotyrosine (Tyr-88). Ser-106 is subject to Phosphoserine. Position 118 is a phosphotyrosine; by PTK6 (Tyr-118). Phosphoserine occurs at positions 119, 126, and 130. The segment covering 121–137 (PNKQKSAEPSPTVMSTS) has biased composition (polar residues). Thr-132 is subject to Phosphothreonine. Phosphoserine is present on residues Ser-137, Ser-140, and Ser-143. An LD motif 2 motif is present at residues 144–156 (ELDRLLLELNAVQ). The interval 159 to 260 (PPGFPADEAN…TQQQTRISAS (102 aa)) is disordered. Tyr-181 carries the phosphotyrosine modification. Positions 216 to 228 (SVESLLDELESSV) match the LD motif 3 motif. Phosphoserine is present on Ser-230. Positions 236–260 (TVNQGEMSSPQRVTSTQQQTRISAS) are enriched in polar residues. Ser-244 is modified (phosphoserine; by CDK5). Residue Ser-250 is modified to Phosphoserine; by SLK. Residues Ser-258, Ser-261, Ser-272, Ser-303, Ser-322, Ser-332, and Ser-340 each carry the phosphoserine modification. Residues 262–315 (ATRELDELMASLSDFKIQGLEQRADGERCWAAGWPRDGGRSSPGGQDEGGFMAQ) are required for binding to PARVA and ILK. The short motif at 265–276 (ELDELMASLSDF) is the LD motif 4 element. The tract at residues 291-335 (WAAGWPRDGGRSSPGGQDEGGFMAQGKTGSSSPPGGPPKPGSQLD) is disordered. The LD motif 5 signature appears at 333-345 (QLDSMLGSLQSDL). 4 consecutive LIM zinc-binding domains span residues 356–415 (GVCG…LFSP), 416–473 (RCYY…DMFA), 474–533 (PKCG…RRGS), and 534–591 (LCSG…KLFC). Residue Ser-533 is modified to Phosphoserine.

This sequence belongs to the paxillin family. Interacts in vitro with VCL/vinculin as well as to the SH3 domain of SRC and, when tyrosine phosphorylated, to the SH2 domain of CRK. Interacts with GIT1. Interacts with NUDT16L1/SDOS. Interacts with PTK2/FAK1. Interacts with PTK2B/PYK2. Interacts with ASAP2. Interacts with unphosphorylated ITGA4. Interacts with RNF5. Interacts with PDCD10. Interacts with NEK3, the interaction is prolactin-dependent. Interacts with PTK6. Interacts with TGFB1I1. Interacts with SORBS1. Interacts with PARVB. Interacts (via LD motif 4) with PARVA/PARVIN. Interacts (via LD motif 4) with ILK. Interacts (via cytoplasmic domain) with CEACAM1; the interaction is phosphotyrosyl-dependent. Interacts with LIMA1; this complex stabilizes actin dynamics. Interacts with CD36 (via C-terminus). Interacts with TRIM15. Interacts with PAK4; PAK4 acts as a scaffold to suppport PAXI phosphorylation at Ser-272. As to quaternary structure, interacts strongly with PTK2/FAK1 and weakly with VCL/vinculin. In terms of assembly, interacts strongly with VCL/vinculin but only weakly with PTK2/FAK1. Phosphorylated by MAPK1/ERK2. Phosphorylated on tyrosine residues during integrin-mediated cell adhesion, embryonic development, fibroblast transformation and following stimulation of cells by mitogens. Phosphorylation at Ser-244 by CDK5 reduces its interaction with PTK2/FAK1 in matrix-cell focal adhesions (MCFA) during oligodendrocytes (OLs) differentiation. Phosphorylation at Tyr-31 and Tyr-118 by PTK6 promote the activation of RAC1 via CRK/CrKII, thereby promoting migration and invasion. Phosphorylation at Ser-250 by SLK is required for PXN redistribution and cell motility. Phosphorylation at Ser-272 promotes focal adhesion disassembly during cell migration.

It localises to the cytoplasm. Its subcellular location is the cytoskeleton. It is found in the cell junction. The protein localises to the focal adhesion. The protein resides in the cell cortex. Its function is as follows. Cytoskeletal protein involved in actin-membrane attachment at sites of cell adhesion to the extracellular matrix (focal adhesion). Recruits other proteins such as TRIM15 to focal adhesion. The polypeptide is Paxillin (Homo sapiens (Human)).